A 364-amino-acid chain; its full sequence is Peptide chain release factor 2 (364 aa).

Gln-251 carries the N5-methylglutamine modification.

This sequence belongs to the prokaryotic/mitochondrial release factor family. Post-translationally, methylated by PrmC. Methylation increases the termination efficiency of RF2.

The protein resides in the cytoplasm. Functionally, peptide chain release factor 2 directs the termination of translation in response to the peptide chain termination codons UGA and UAA. This Sulfurovum sp. (strain NBC37-1) protein is Peptide chain release factor 2.